The following is a 623-amino-acid chain: uncharacterized protein (623 aa).

Residues 1 to 18 (MSSRSGSADTFTQRSDSN) are compositionally biased toward polar residues. Disordered stretches follow at residues 1-107 (MSSR…DPFT), 132-181 (LGSD…EIGA), 207-231 (SWNL…ADTD), 298-349 (REET…ESDQ), 384-464 (RKSV…DRNV), 533-553 (SIND…PPET), and 568-623 (VESR…TKGD). Basic and acidic residues predominate over residues 25–34 (ISLDDVRDNN). Residues 39 to 49 (SSSGISTTGSS) are compositionally biased toward low complexity. The segment covering 132–144 (LGSDTARPTSNGG) has biased composition (polar residues). Residues 165–177 (STSTWGPSGPTTP) show a composition bias toward low complexity. A compositionally biased stretch (polar residues) spans 328–339 (EKSTFSRISEQP). Residues 400-417 (QTPTISTASSPIQPSSSP) show a composition bias toward low complexity. A compositionally biased stretch (polar residues) spans 533–548 (SINDLQQGTSSSQNQA). The segment covering 604–614 (PSASPSTSRTR) has biased composition (low complexity).

This is an uncharacterized protein from Emericella nidulans (strain FGSC A4 / ATCC 38163 / CBS 112.46 / NRRL 194 / M139) (Aspergillus nidulans).